Reading from the N-terminus, the 412-residue chain is Major facilitator superfamily domain-containing protein 3 (412 aa).

The next 12 membrane-spanning stretches (helical) occupy residues 10 to 30 (GLYLVQGLPYGLQSGLLPVLL), 40 to 60 (VGLAKVLYAPWLLKLAWAPLV), 73 to 93 (STAGLGLVCGLLAGLPPPGAG), 94 to 114 (QAGLPAAVAGLLLLLNLGAAM), 138 to 158 (VQVVAYKLGAALAGGALLALL), 166 to 186 (LFLLLAATYWLAAALAWAAPA), 209 to 229 (VLAVPGTVWTAGFVLTYKLGE), 250 to 270 (LGLWNGVGAVVCSIAGSSLGG), 291 to 311 (LGGLACQTALVFHLDTLGASM), 321 to 341 (ALLSLCLQHFLGGLVTTVTFT), 361 to 381 (LLATLELLGKLLLGTLAGGLA), and 384 to 404 (LGPHPCFLLLLILSAFPVLYL).

This sequence belongs to the major facilitator superfamily.

It is found in the membrane. The sequence is that of Major facilitator superfamily domain-containing protein 3 (MFSD3) from Homo sapiens (Human).